Here is a 360-residue protein sequence, read N- to C-terminus: Phospho-N-acetylmuramoyl-pentapeptide-transferase (360 aa).

Helical transmembrane passes span Arg-25–Ile-45, Thr-73–Leu-93, Tyr-97–Tyr-117, Val-142–Ile-162, Ala-168–Ser-188, Gly-199–Ser-219, Ala-236–Phe-256, Val-263–Ile-283, Ile-288–Val-308, and Val-338–Lys-358.

Belongs to the glycosyltransferase 4 family. MraY subfamily. It depends on Mg(2+) as a cofactor.

The protein localises to the cell inner membrane. It catalyses the reaction UDP-N-acetyl-alpha-D-muramoyl-L-alanyl-gamma-D-glutamyl-meso-2,6-diaminopimeloyl-D-alanyl-D-alanine + di-trans,octa-cis-undecaprenyl phosphate = di-trans,octa-cis-undecaprenyl diphospho-N-acetyl-alpha-D-muramoyl-L-alanyl-D-glutamyl-meso-2,6-diaminopimeloyl-D-alanyl-D-alanine + UMP. Its pathway is cell wall biogenesis; peptidoglycan biosynthesis. Its function is as follows. Catalyzes the initial step of the lipid cycle reactions in the biosynthesis of the cell wall peptidoglycan: transfers peptidoglycan precursor phospho-MurNAc-pentapeptide from UDP-MurNAc-pentapeptide onto the lipid carrier undecaprenyl phosphate, yielding undecaprenyl-pyrophosphoryl-MurNAc-pentapeptide, known as lipid I. The protein is Phospho-N-acetylmuramoyl-pentapeptide-transferase of Pseudomonas fluorescens (strain SBW25).